The sequence spans 187 residues: Ribonuclease HII (187 aa).

The region spanning 1–187 (MICGTDEAGR…NPVKRLLANL (187 aa)) is the RNase H type-2 domain. A divalent metal cation-binding residues include D6, E7, and D98.

The protein belongs to the RNase HII family. Mn(2+) serves as cofactor. Requires Mg(2+) as cofactor.

Its subcellular location is the cytoplasm. The enzyme catalyses Endonucleolytic cleavage to 5'-phosphomonoester.. Its function is as follows. Endonuclease that specifically degrades the RNA of RNA-DNA hybrids. The sequence is that of Ribonuclease HII from Idiomarina loihiensis (strain ATCC BAA-735 / DSM 15497 / L2-TR).